The sequence spans 416 residues: Transmembrane protease serine 11B-like protein (416 aa).

Over 1 to 15 the chain is Cytoplasmic; that stretch reads MYRPVIASRKSIPPW. Residues 16–36 form a helical; Signal-anchor for type II membrane protein membrane-spanning segment; the sequence is LIILCVLGVLAALGIIIGLLV. Residues 37-416 lie on the Extracellular side of the membrane; sequence HFLAVENKIY…RNWIASKTGI (380 aa). Residues 44–161 enclose the SEA domain; that stretch reads KIYYYQGGFK…GSLKLTEISK (118 aa). Residue asparagine 107 is glycosylated (N-linked (GlcNAc...) asparagine). In terms of domain architecture, Peptidase S1 spans 185–415; that stretch reads ITGGSTAHKG…YRNWIASKTG (231 aa). Residues cysteine 210 and cysteine 226 are joined by a disulfide bond. Histidine 225 serves as the catalytic Charge relay system. N-linked (GlcNAc...) asparagine glycosylation occurs at asparagine 235. Aspartate 270 serves as the catalytic Charge relay system. 2 cysteine pairs are disulfide-bonded: cysteine 335-cysteine 351 and cysteine 362-cysteine 391. Serine 366 functions as the Charge relay system in the catalytic mechanism.

This sequence belongs to the peptidase S1 family. In terms of tissue distribution, expressed in esophagus, cervix, tongue, and testes.

Its subcellular location is the cell membrane. Inhibited by aprotinin, leupeptin, benzamidine, SERPINA1, SPINT1 and SPINT2. Its function is as follows. Serine protease. This Mus musculus (Mouse) protein is Transmembrane protease serine 11B-like protein (Tmprss11b).